The following is a 279-amino-acid chain: Acyl-[acyl-carrier-protein]--UDP-N-acetylglucosamine O-acyltransferase (279 aa).

Residues 260–279 (AAKEAFQEESVDKEGALVES) form a disordered region.

This sequence belongs to the transferase hexapeptide repeat family. LpxA subfamily. Homotrimer.

The protein localises to the cytoplasm. The catalysed reaction is a (3R)-hydroxyacyl-[ACP] + UDP-N-acetyl-alpha-D-glucosamine = a UDP-3-O-[(3R)-3-hydroxyacyl]-N-acetyl-alpha-D-glucosamine + holo-[ACP]. It participates in glycolipid biosynthesis; lipid IV(A) biosynthesis; lipid IV(A) from (3R)-3-hydroxytetradecanoyl-[acyl-carrier-protein] and UDP-N-acetyl-alpha-D-glucosamine: step 1/6. Its function is as follows. Involved in the biosynthesis of lipid A, a phosphorylated glycolipid that anchors the lipopolysaccharide to the outer membrane of the cell. This chain is Acyl-[acyl-carrier-protein]--UDP-N-acetylglucosamine O-acyltransferase, found in Chlamydia abortus (strain DSM 27085 / S26/3) (Chlamydophila abortus).